The chain runs to 574 residues: Fusion glycoprotein F0 (574 aa).

Positions 1 to 25 (MELLILKANAITTILTAVTFCFASG) are cleaved as a signal peptide. Topologically, residues 26 to 524 (QNITEEFYQS…NVNAGKSTTN (499 aa)) are extracellular. N-linked (GlcNAc...) asparagine; by host glycans are attached at residues Asn-27 and Asn-70. Disulfide bonds link Cys-37-Cys-439, Cys-69-Cys-212, Cys-313-Cys-343, Cys-322-Cys-333, Cys-358-Cys-367, Cys-382-Cys-393, and Cys-416-Cys-422. A coiled-coil region spans residues 76 to 96 (VKLIKQELDKYKNAVTELQLL). Residues Asn-116, Asn-120, and Asn-126 are each glycosylated (N-linked (GlcNAc...) asparagine; by host). The interval 137-157 (FLGFLLGVGSAIASGVAVSKV) is fusion peptide. The stretch at 158–209 (LHLEGEVNKIKSALLSTNKAVVSLSNGVSVLTSKVLDLKNYIDKQLLPIVNK) forms a coiled coil. Positions 481 to 516 (LVFPSDEFDASISQVNEKINQSLAFIRKSDELLHNV) form a coiled coil. The N-linked (GlcNAc...) asparagine; by host glycan is linked to Asn-500. A helical transmembrane segment spans residues 525–550 (IMITTIIIVIIVILLSLIAVGLLLYC). Cys-550 carries S-palmitoyl cysteine; by host lipidation. Residues 551-574 (KARSTPVTLSKDQLSGINNIAFSN) lie on the Cytoplasmic side of the membrane.

This sequence belongs to the paramyxoviruses fusion glycoprotein family. In terms of assembly, homotrimer. Heterodimer with fusion protein F2; disulfide-linked. Interacts with host NCL; this interaction plays a role in viral entry into the host cell. As a heterodimer with F2, interacts with host heparan sulfate. As a heterodimer with F2, interacts with host IGF1R; this interaction activates PRKCZ/PKCzeta that recruits NCL/nucleolin from the host nucleus to the plasma membrane. Part of a complex composed of F1, F2 and G glycoproteins. As a heterodimer with F2, interacts with host RHOA; this interaction facilitates virus-induced syncytium formation. Homotrimer. Heterodimer with fusion protein F1; disulfide-linked. As a heterodimer with F1, interacts with host heparan sulfate. As a heterodimer with F1, interacts with host IGF1R; this interaction activates PRKCZ/PKCzeta that recruits NCL/nucleolin from the host nucleus to the plasma membrane. Part of a complex composed of F1, F2 and G glycoproteins. As a heterodimer with F1, interacts with host RHOA; this interaction facilitates virus-induced syncytium formation. Post-translationally, the F glycoprotein is synthesized as a F0 inactive precursor that is heavily N-glycosylated and processed at two sites by a host furin-like protease probably in the Golgi. The cleavage site between p27 and F1 may occur after endocytosis to yield the mature F1 and F2 proteins. Both cleavages are required for membrane fusion and p27 is released from the processed protein.

The protein resides in the host Golgi apparatus membrane. It is found in the virion membrane. It localises to the host cell membrane. Its function is as follows. Inactive precursor that is cleaved at two sites by a furin-like protease to give rise to the mature F1 and F2 fusion glycoproteins. Functionally, class I viral fusion protein. Under the current model, the protein has at least 3 conformational states: pre-fusion native state, pre-hairpin intermediate state, and post-fusion hairpin state. During viral and plasma cell membrane fusion, the coiled coil regions assume a trimer-of-hairpins structure, positioning the fusion peptide in close proximity to the C-terminal region of the ectodomain. The formation of this structure appears to drive apposition and subsequent fusion of viral and cellular membranes leading to delivery of the nucleocapsid into the cytoplasm. This fusion is pH independent and occurs at the plasma or endosomal membrane. The trimer of F1-F2 (F protein) also facilitates the attachment to host cell by binding to host heparan sulfate. F protein is involved in the entry into the host cell through the interaction with host IGF1R. This interaction activates PRKCZ/PKCzeta that recruits host NCL/nucleolin to the apical cell surface where it can bind fusion glycoprotein F1. Later in infection, F protein expressed at the plasma membrane of infected cells can mediate fusion with adjacent cells to form syncytia, a cytopathic effect that could lead to tissue necrosis. F protein may trigger p53-dependent apoptosis. Major determinant of the species specificity of RSV infection. The trimer of F1-F2 (F protein) also facilitates the attachment to host cell by binding to host heparan sulfate. F protein is involved in the entry into the host cell through the interaction with host IGF1R. This interaction activates PRKCZ/PKCzeta that recruits host NCL/nucleolin to the apical cell surface where it can bind fusion glycoprotein F1. Later in infection, F protein expressed at the plasma membrane of infected cells can mediate fusion with adjacent cells to form syncytia, a cytopathic effect that could lead to tissue necrosis. F protein seems to trigger p53-dependent apoptosis. The chain is Fusion glycoprotein F0 (F) from Human respiratory syncytial virus A (strain A2).